Consider the following 274-residue polypeptide: Formamidopyrimidine-DNA glycosylase (274 aa).

P2 functions as the Schiff-base intermediate with DNA in the catalytic mechanism. The active-site Proton donor is the E3. K58 serves as the catalytic Proton donor; for beta-elimination activity. Residues H91, R110, and K152 each coordinate DNA. An FPG-type zinc finger spans residues 237-271 (KVYGRKNLPCLVCENKIETVVIAGRHSAFCPHCQP). R261 acts as the Proton donor; for delta-elimination activity in catalysis.

Belongs to the FPG family. In terms of assembly, monomer. Requires Zn(2+) as cofactor.

It catalyses the reaction Hydrolysis of DNA containing ring-opened 7-methylguanine residues, releasing 2,6-diamino-4-hydroxy-5-(N-methyl)formamidopyrimidine.. The enzyme catalyses 2'-deoxyribonucleotide-(2'-deoxyribose 5'-phosphate)-2'-deoxyribonucleotide-DNA = a 3'-end 2'-deoxyribonucleotide-(2,3-dehydro-2,3-deoxyribose 5'-phosphate)-DNA + a 5'-end 5'-phospho-2'-deoxyribonucleoside-DNA + H(+). Involved in base excision repair of DNA damaged by oxidation or by mutagenic agents. Acts as a DNA glycosylase that recognizes and removes damaged bases. Has a preference for oxidized purines, such as 7,8-dihydro-8-oxoguanine (8-oxoG). Has AP (apurinic/apyrimidinic) lyase activity and introduces nicks in the DNA strand. Cleaves the DNA backbone by beta-delta elimination to generate a single-strand break at the site of the removed base with both 3'- and 5'-phosphates. The protein is Formamidopyrimidine-DNA glycosylase of Legionella pneumophila (strain Paris).